The chain runs to 532 residues: Neutral amino acid transporter A (532 aa).

Methionine 1 is modified (N-acetylmethionine). The segment covering 1 to 10 (MEKSNETNGY) has biased composition (polar residues). The interval 1–25 (MEKSNETNGYLDSAQAGPAAGPGAP) is disordered. Over 1-41 (MEKSNETNGYLDSAQAGPAAGPGAPGTAAGRARRCAGFLRR) the chain is Cytoplasmic. A compositionally biased stretch (low complexity) spans 14–25 (AQAGPAAGPGAP). Helical transmembrane passes span 42 to 62 (QALV…GAAL), 88 to 108 (MIIL…LDAS), and 119 to 139 (AYFG…AFII). At 140 to 216 (KPGSGAQTLQ…VTHEKIPIGT (77 aa)) the chain is on the extracellular side. Asparagine 201 and asparagine 206 each carry an N-linked (GlcNAc...) asparagine glycan. The next 6 helical transmembrane spans lie at 217-237 (EIEG…GVAL), 257-277 (ATMV…MFLV), 298-318 (IFAS…LIYF), 328-348 (FLLG…SSAT), 373-393 (IGAT…AVFI), and 418-438 (VGAA…LEAI). The interval 500–532 (CKSEEETSPLVTHQNPAGPVASAPELESKESVL) is disordered. A phosphoserine mark is found at serine 507, serine 527, and serine 530.

It belongs to the dicarboxylate/amino acid:cation symporter (DAACS) (TC 2.A.23) family. SLC1A4 subfamily. As to expression, expressed mostly in brain, muscle, and pancreas but detected in all tissues examined.

The protein resides in the membrane. It is found in the melanosome. It catalyses the reaction L-threonine(in) + Na(+)(in) = L-threonine(out) + Na(+)(out). It carries out the reaction L-serine(in) + Na(+)(in) = L-serine(out) + Na(+)(out). The enzyme catalyses L-cysteine(in) + Na(+)(in) = L-cysteine(out) + Na(+)(out). The catalysed reaction is L-alanine(in) + Na(+)(in) = L-alanine(out) + Na(+)(out). It catalyses the reaction L-proline(in) + Na(+)(in) = L-proline(out) + Na(+)(out). It carries out the reaction 4-hydroxy-L-proline(in) + Na(+)(in) = 4-hydroxy-L-proline(out) + Na(+)(out). Sodium-dependent neutral amino-acid transporter that mediates transport of alanine, serine, cysteine, proline, hydroxyproline and threonine. The protein is Neutral amino acid transporter A of Homo sapiens (Human).